A 395-amino-acid chain; its full sequence is Vomeronasal type-1 receptor 2 (395 aa).

Residues 12–32 traverse the membrane as a helical segment; it reads LYPINISAAWHLGPLPVSCFV. The Extracellular segment spans residues 33–51; that stretch reads SNKYQCSLAFGATTGLRVL. The chain crosses the membrane as a helical span at residues 52-72; that stretch reads VVVVPQTQLSFLSSLCLVSLF. Topologically, residues 73–93 are cytoplasmic; that stretch reads LHSLVSAHGEKPTKPVGLDPT. A helical transmembrane segment spans residues 94 to 114; the sequence is LFQVVVGILGNFSLLYYYMFL. The Extracellular portion of the chain corresponds to 115–170; the sequence is YFRGYKPRSTDLILRHLTVADSLVILSKRIPETMATFGLKHFDNYFGCKFLLYAHR. The helical transmembrane segment at 171–191 threads the bilayer; that stretch reads VGRGVSIGSTCLLSVFQVITI. Over 192–208 the chain is Cytoplasmic; that stretch reads NPRNSRWAEMKVKAPTY. Residues 209 to 229 form a helical membrane-spanning segment; that stretch reads IGLSNILCWAFHMLVNAIFPI. At 230 to 267 the chain is on the extracellular side; sequence YTTGKWSNNNITKKGDLGYCSAPLSDEVTKSVYAALTS. A glycan (N-linked (GlcNAc...) asparagine) is linked at Asn239. The chain crosses the membrane as a helical span at residues 268-288; sequence FHDVLCLGLMLWASSSIVLVL. At 289–316 the chain is on the cytoplasmic side; that stretch reads YRHKQQVQHICRNNLYPNSSPGNRAIQS. A helical transmembrane segment spans residues 317–337; sequence ILALVSTFALCYALSFITYVY. The Extracellular segment spans residues 338 to 346; it reads LALFDNSSW. Asn343 is a glycosylation site (N-linked (GlcNAc...) asparagine). Residues 347–367 traverse the membrane as a helical segment; it reads WLVNTAALIIACFPTISPFVL. Residues 368-395 lie on the Cytoplasmic side of the membrane; that stretch reads MCRDPSRSRLCSICCRRNRRFFHDFRKM.

The protein belongs to the G-protein coupled receptor 1 family.

It is found in the cell membrane. Its function is as follows. Putative pheromone receptor. This is Vomeronasal type-1 receptor 2 (VN1R2) from Homo sapiens (Human).